Consider the following 225-residue polypeptide: 2-C-methyl-D-erythritol 4-phosphate cytidylyltransferase (225 aa).

Belongs to the IspD/TarI cytidylyltransferase family. IspD subfamily.

The catalysed reaction is 2-C-methyl-D-erythritol 4-phosphate + CTP + H(+) = 4-CDP-2-C-methyl-D-erythritol + diphosphate. The protein operates within isoprenoid biosynthesis; isopentenyl diphosphate biosynthesis via DXP pathway; isopentenyl diphosphate from 1-deoxy-D-xylulose 5-phosphate: step 2/6. Catalyzes the formation of 4-diphosphocytidyl-2-C-methyl-D-erythritol from CTP and 2-C-methyl-D-erythritol 4-phosphate (MEP). This Cereibacter sphaeroides (strain KD131 / KCTC 12085) (Rhodobacter sphaeroides) protein is 2-C-methyl-D-erythritol 4-phosphate cytidylyltransferase.